The chain runs to 616 residues: Chaperone protein HtpG (616 aa).

The segment at 1–333 is a; substrate-binding; it reads MKKQFDTEVN…CQDLPLNVSR (333 aa). A b region spans residues 334–542; sequence EILQQNKILS…SNDPTYQMQK (209 aa). Positions 543-616 are c; sequence IMLSMGQEVK…INEFIEKDFL (74 aa).

This sequence belongs to the heat shock protein 90 family. As to quaternary structure, homodimer.

Its subcellular location is the cytoplasm. Molecular chaperone. Has ATPase activity. The chain is Chaperone protein HtpG from Borreliella burgdorferi (strain ATCC 35210 / DSM 4680 / CIP 102532 / B31) (Borrelia burgdorferi).